The sequence spans 294 residues: N-acetylmuramic acid 6-phosphate etherase (294 aa).

The region spanning 54–217 is the SIS domain; sequence VIKSFEEEGR…STASMIGVGK (164 aa). The Proton donor role is filled by Glu82. Glu113 is an active-site residue.

The protein belongs to the GCKR-like family. MurNAc-6-P etherase subfamily. Homodimer.

It catalyses the reaction N-acetyl-D-muramate 6-phosphate + H2O = N-acetyl-D-glucosamine 6-phosphate + (R)-lactate. Its pathway is amino-sugar metabolism; N-acetylmuramate degradation. Specifically catalyzes the cleavage of the D-lactyl ether substituent of MurNAc 6-phosphate, producing GlcNAc 6-phosphate and D-lactate. The chain is N-acetylmuramic acid 6-phosphate etherase from Bacillus cereus (strain ATCC 14579 / DSM 31 / CCUG 7414 / JCM 2152 / NBRC 15305 / NCIMB 9373 / NCTC 2599 / NRRL B-3711).